The primary structure comprises 381 residues: Putrescine N-methyltransferase 3 (381 aa).

The segment at 21-81 is disordered; sequence MNGYQNGTSK…TISHDNGNEL (61 aa). Composition is skewed to polar residues over residues 23-39 and 46-81; these read GYQN…QNGT and HQNG…GNEL. In terms of domain architecture, PABS spans 92 to 329; it reads PGWFSEFSAL…GVIGYMLCST (238 aa). S-adenosyl-L-methionine is bound by residues glutamine 123, glutamate 198, and 229–230; that span reads DG. Aspartate 248 serves as the catalytic Proton acceptor. Tyrosine 317 is a binding site for S-adenosyl-L-methionine.

This sequence belongs to the class I-like SAM-binding methyltransferase superfamily. Putrescine methyltransferase family. Predominantly expressed in roots.

The enzyme catalyses putrescine + S-adenosyl-L-methionine = N-methylputrescine + S-adenosyl-L-homocysteine + H(+). It participates in alkaloid biosynthesis; nicotine biosynthesis. In terms of biological role, involved in the biosynthesis of pyridine alkaloid natural products, leading mainly to the production of anabasine, anatabine, nicotine and nornicotine, effective deterrents against herbivores with antiparasitic and pesticide properties (neurotoxins); nornicotine serves as the precursor in the synthesis of the carcinogen compound N'-nitrosonornicotine (NNN). Methyltransferase that mediates the conversion of putrescine to N-methylputrescine. Promotes leaves ripening. The protein is Putrescine N-methyltransferase 3 of Nicotiana tabacum (Common tobacco).